A 184-amino-acid polypeptide reads, in one-letter code: dCTP deaminase (184 aa).

DCTP is bound by residues 107-112 (KSTYAR), 131-133 (TLE), Gln152, Tyr166, and Gln176. Catalysis depends on Glu133, which acts as the Proton donor/acceptor.

Belongs to the dCTP deaminase family. As to quaternary structure, homotrimer.

It carries out the reaction dCTP + H2O + H(+) = dUTP + NH4(+). It participates in pyrimidine metabolism; dUMP biosynthesis; dUMP from dCTP (dUTP route): step 1/2. Functionally, catalyzes the deamination of dCTP to dUTP. The chain is dCTP deaminase from Novosphingobium aromaticivorans (strain ATCC 700278 / DSM 12444 / CCUG 56034 / CIP 105152 / NBRC 16084 / F199).